The chain runs to 403 residues: Ribosomal RNA large subunit methyltransferase I (403 aa).

Residues 9-88 (YPRLILSKGR…ESIDIAFFTR (80 aa)) enclose the PUA domain.

Belongs to the methyltransferase superfamily. RlmI family.

It localises to the cytoplasm. The enzyme catalyses cytidine(1962) in 23S rRNA + S-adenosyl-L-methionine = 5-methylcytidine(1962) in 23S rRNA + S-adenosyl-L-homocysteine + H(+). Functionally, specifically methylates the cytosine at position 1962 (m5C1962) of 23S rRNA. The sequence is that of Ribosomal RNA large subunit methyltransferase I from Salmonella paratyphi C (strain RKS4594).